Consider the following 390-residue polypeptide: Two-component response regulator ORR29 (390 aa).

The region spanning 13-130 (SAMVIDEDKC…TIKNLWQYVD (118 aa)) is the Response regulatory domain. Residue Asp65 is modified to 4-aspartylphosphate. The myb-like GARP DNA-binding region spans 169–226 (KKYYLMWTPHLQKKFLHALQILGKDASPKNIKKIMGVDNIDCRQIAAHLQKHRLRLTK). Disordered regions lie at residues 233–271 (FTTD…QPTE) and 303–339 (SKHS…SGDH). The span at 257-271 (NASTLQPRSNTQPTE) shows a compositional bias: polar residues.

The protein belongs to the ARR family. Type-B subfamily. Two-component system major event consists of a His-to-Asp phosphorelay between a sensor histidine kinase (HK) and a response regulator (RR). In plants, the His-to-Asp phosphorelay involves an additional intermediate named Histidine-containing phosphotransfer protein (HPt). This multistep phosphorelay consists of a His-Asp-His-Asp sequential transfer of a phosphate group between first a His and an Asp of the HK protein, followed by the transfer to a conserved His of the HPt protein and finally the transfer to an Asp in the receiver domain of the RR protein.

The protein localises to the nucleus. Its function is as follows. Transcriptional activator that binds specific DNA sequence. Functions as a response regulator involved in His-to-Asp phosphorelay signal transduction system. Phosphorylation of the Asp residue in the receiver domain activates the ability of the protein to promote the transcription of target genes. May directly activate some type-A response regulators in response to cytokinins. The chain is Two-component response regulator ORR29 from Oryza sativa subsp. indica (Rice).